Reading from the N-terminus, the 188-residue chain is V-type ATP synthase subunit E (188 aa).

The protein belongs to the V-ATPase E subunit family.

Produces ATP from ADP in the presence of a proton gradient across the membrane. This Thermus thermophilus (strain ATCC BAA-163 / DSM 7039 / HB27) protein is V-type ATP synthase subunit E.